The following is a 99-amino-acid chain: Beta-2-microglobulin (99 aa).

An Ig-like C1-type domain is found at 5–92; the sequence is PNVQVYSRHP…KHVTLKEPMT (88 aa). An intrachain disulfide couples cysteine 25 to cysteine 80.

The protein belongs to the beta-2-microglobulin family. As to quaternary structure, heterodimer of an alpha chain and a beta chain. Beta-2-microglobulin is the beta-chain of major histocompatibility complex class I molecules.

The protein localises to the secreted. Its function is as follows. Component of the class I major histocompatibility complex (MHC). Involved in the presentation of peptide antigens to the immune system. The chain is Beta-2-microglobulin (B2M) from Oryctolagus cuniculus (Rabbit).